We begin with the raw amino-acid sequence, 175 residues long: UPF0398 protein SGO_0588 (175 aa).

It belongs to the UPF0398 family.

This chain is UPF0398 protein SGO_0588, found in Streptococcus gordonii (strain Challis / ATCC 35105 / BCRC 15272 / CH1 / DL1 / V288).